Consider the following 154-residue polypeptide: Putative pre-16S rRNA nuclease (154 aa).

The protein belongs to the YqgF nuclease family.

The protein resides in the cytoplasm. Its function is as follows. Could be a nuclease involved in processing of the 5'-end of pre-16S rRNA. This chain is Putative pre-16S rRNA nuclease, found in Ruegeria pomeroyi (strain ATCC 700808 / DSM 15171 / DSS-3) (Silicibacter pomeroyi).